The sequence spans 117 residues: MAWTPLFLFLLTCCPGSNSQTVVTQEPSLTVSPGGTVTLTCASSTGAVTSGYYPNWFQQKPGQAPRALIYSTSNKHSWTPARFSGSLLGGKAALTLSGVQPEDEAEYYCLLYYGGAQ.

An N-terminal signal peptide occupies residues 1–19 (MAWTPLFLFLLTCCPGSNS). A framework-1 region spans residues 20–44 (QTVVTQEPSLTVSPGGTVTLTCASS). An Ig-like domain is found at 20-117 (QTVVTQEPSL…YCLLYYGGAQ (98 aa)). Cys41 and Cys109 are joined by a disulfide. Residues 45–53 (TGAVTSGYY) are complementarity-determining-1. The framework-2 stretch occupies residues 54-70 (PNWFQQKPGQAPRALIY). Residues 71 to 73 (STS) are complementarity-determining-2. A framework-3 region spans residues 74 to 109 (NKHSWTPARFSGSLLGGKAALTLSGVQPEDEAEYYC). Positions 110–117 (LLYYGGAQ) are complementarity-determining-3.

As to quaternary structure, immunoglobulins are composed of two identical heavy chains and two identical light chains; disulfide-linked.

It localises to the secreted. The protein localises to the cell membrane. In terms of biological role, v region of the variable domain of immunoglobulin light chains that participates in the antigen recognition. Immunoglobulins, also known as antibodies, are membrane-bound or secreted glycoproteins produced by B lymphocytes. In the recognition phase of humoral immunity, the membrane-bound immunoglobulins serve as receptors which, upon binding of a specific antigen, trigger the clonal expansion and differentiation of B lymphocytes into immunoglobulins-secreting plasma cells. Secreted immunoglobulins mediate the effector phase of humoral immunity, which results in the elimination of bound antigens. The antigen binding site is formed by the variable domain of one heavy chain, together with that of its associated light chain. Thus, each immunoglobulin has two antigen binding sites with remarkable affinity for a particular antigen. The variable domains are assembled by a process called V-(D)-J rearrangement and can then be subjected to somatic hypermutations which, after exposure to antigen and selection, allow affinity maturation for a particular antigen. In Homo sapiens (Human), this protein is Immunoglobulin lambda variable 7-43.